The sequence spans 215 residues: Putative serine/threonine-protein kinase YrzF (215 aa).

The Protein kinase domain occupies 27–215; sequence SEELTLIGKG…HFAQRKRKYS (189 aa). ATP contacts are provided by residues 33–41 and Lys-54; that span reads IGKGRSAYV. The active-site Proton acceptor is the Asp-135.

It belongs to the protein kinase superfamily. Ser/Thr protein kinase family.

It catalyses the reaction L-seryl-[protein] + ATP = O-phospho-L-seryl-[protein] + ADP + H(+). It carries out the reaction L-threonyl-[protein] + ATP = O-phospho-L-threonyl-[protein] + ADP + H(+). In Bacillus subtilis (strain 168), this protein is Putative serine/threonine-protein kinase YrzF (yrzF).